Reading from the N-terminus, the 274-residue chain is Shikimate dehydrogenase (NADP(+)) (274 aa).

Shikimate is bound by residues 14 to 16 (SKS) and Thr-61. Catalysis depends on Lys-65, which acts as the Proton acceptor. Residue Glu-77 participates in NADP(+) binding. Asn-86 and Asp-102 together coordinate shikimate. NADP(+)-binding positions include 126 to 130 (GAGGA), 149 to 154 (NRTLEK), and Met-212. Residue Tyr-214 coordinates shikimate. Gly-237 serves as a coordination point for NADP(+).

It belongs to the shikimate dehydrogenase family. Homodimer.

The catalysed reaction is shikimate + NADP(+) = 3-dehydroshikimate + NADPH + H(+). It functions in the pathway metabolic intermediate biosynthesis; chorismate biosynthesis; chorismate from D-erythrose 4-phosphate and phosphoenolpyruvate: step 4/7. Involved in the biosynthesis of the chorismate, which leads to the biosynthesis of aromatic amino acids. Catalyzes the reversible NADPH linked reduction of 3-dehydroshikimate (DHSA) to yield shikimate (SA). The protein is Shikimate dehydrogenase (NADP(+)) of Actinobacillus pleuropneumoniae serotype 5b (strain L20).